Here is a 202-residue protein sequence, read N- to C-terminus: Na(+)-translocating NADH-quinone reductase subunit E (202 aa).

6 helical membrane passes run 11 to 31 (AVFI…FIAI), 35 to 55 (VETA…TVPA), 79 to 99 (LSFL…QILE), 114 to 134 (GVFL…LFMV), 144 to 164 (VVYG…LAGI), and 180 to 200 (LGIT…FSGV).

The protein belongs to the NqrDE/RnfAE family. In terms of assembly, composed of six subunits; NqrA, NqrB, NqrC, NqrD, NqrE and NqrF.

It localises to the cell inner membrane. It catalyses the reaction a ubiquinone + n Na(+)(in) + NADH + H(+) = a ubiquinol + n Na(+)(out) + NAD(+). Its function is as follows. NQR complex catalyzes the reduction of ubiquinone-1 to ubiquinol by two successive reactions, coupled with the transport of Na(+) ions from the cytoplasm to the periplasm. NqrA to NqrE are probably involved in the second step, the conversion of ubisemiquinone to ubiquinol. This Stutzerimonas stutzeri (strain A1501) (Pseudomonas stutzeri) protein is Na(+)-translocating NADH-quinone reductase subunit E.